A 443-amino-acid polypeptide reads, in one-letter code: F-box only protein 39 (443 aa).

An F-box domain is found at 13–59 (QSCWATLPDVCLRRVFWWLGDRDRSRAALVCRKWNQIMYSADLWRYR).

Directly interacts with SKP1 and CUL1.

Substrate-recognition component of the SCF (SKP1-CUL1-F-box protein)-type E3 ubiquitin ligase complex. The chain is F-box only protein 39 (Fbxo39) from Mus musculus (Mouse).